Reading from the N-terminus, the 622-residue chain is Low affinity potassium transport system protein Kup (622 aa).

The next 12 helical transmembrane spans lie at 9-29 (LPAI…TSPL), 49-69 (VFGF…IKYL), 103-123 (VIMG…TPAI), 137-157 (PQLD…LFMI), 165-185 (VGKL…GLGL), 213-233 (VSFI…ALYA), 247-267 (WFTV…ALLL), 276-296 (PFFL…AALA), 337-357 (IYIP…IVSF), 363-383 (LAAA…ILST), 396-416 (FVAL…TANL), and 419-439 (LLSG…VMTT).

It belongs to the HAK/KUP transporter (TC 2.A.72) family.

It is found in the cell inner membrane. The enzyme catalyses K(+)(in) + H(+)(in) = K(+)(out) + H(+)(out). In terms of biological role, responsible for the low-affinity transport of potassium into the cell. Likely operates as a K(+):H(+) symporter. The chain is Low affinity potassium transport system protein Kup from Shigella sonnei (strain Ss046).